The sequence spans 132 residues: Putative F-box protein At4g05620 (132 aa).

The F-box domain maps to 17-63; sequence QKKSLSLPHDVLVSCLAHVSRLHYSILSLVLKNFRSLIASPELYKTR.

The protein is Putative F-box protein At4g05620 of Arabidopsis thaliana (Mouse-ear cress).